Here is a 344-residue protein sequence, read N- to C-terminus: Bifunctional trans-3-hydroxy-L-proline dehydratase/2-epimerase (344 aa).

S90 acts as the Proton acceptor in catalysis. Substrate is bound by residues G91–S92, D252, and G257–T258.

The protein belongs to the proline racemase family.

It catalyses the reaction trans-3-hydroxy-L-proline = 1-pyrroline-2-carboxylate + H2O. It carries out the reaction trans-3-hydroxy-L-proline = cis-3-hydroxy-D-proline. Functionally, bifunctional enzyme catalyzing both the dehydration of trans-3-hydroxy-L-proline (t3LHyp) to Delta(1)-pyrroline-2-carboxylate (Pyr2C) and 2-epimerization of t3LHyp to cis-3-hydroxy-D-proline (c3DHyp). No dehydratase activity with L-proline, trans-4-hydroxy-L-proline (t4LHyp), cis-4-hydroxy-L-proline (c4LHyp), D-proline, cis-4-hydroxy-D-proline (c4DHyp), trans-4-hydroxy-D-proline (t4DHyp) or L-serine as substrates. Displays neither t4LHyp epimerase nor proline racemase activity. Is likely involved in a degradation pathway that converts t3LHyp to L-proline, which would allow P.aeruginosa to grow on t3LHyp as a sole carbon source. The chain is Bifunctional trans-3-hydroxy-L-proline dehydratase/2-epimerase from Pseudomonas aeruginosa (strain ATCC 15692 / DSM 22644 / CIP 104116 / JCM 14847 / LMG 12228 / 1C / PRS 101 / PAO1).